A 383-amino-acid polypeptide reads, in one-letter code: Glucose-1-phosphate adenylyltransferase (383 aa).

Residues Y100, G165, 180-181 (EK), and S191 contribute to the alpha-D-glucose 1-phosphate site.

It belongs to the bacterial/plant glucose-1-phosphate adenylyltransferase family. In terms of assembly, homotetramer.

The catalysed reaction is alpha-D-glucose 1-phosphate + ATP + H(+) = ADP-alpha-D-glucose + diphosphate. The protein operates within glycan biosynthesis; glycogen biosynthesis. Functionally, involved in the biosynthesis of ADP-glucose, a building block required for the elongation reactions to produce glycogen. Catalyzes the reaction between ATP and alpha-D-glucose 1-phosphate (G1P) to produce pyrophosphate and ADP-Glc. The polypeptide is Glucose-1-phosphate adenylyltransferase (Clostridium kluyveri (strain ATCC 8527 / DSM 555 / NBRC 12016 / NCIMB 10680 / K1)).